A 183-amino-acid chain; its full sequence is Peptidyl-prolyl cis-trans isomerase 11 (183 aa).

The PPIase cyclophilin-type domain maps to 20-182 (FLEVTAGGAP…LPIVVVQCGQ (163 aa)).

Belongs to the cyclophilin-type PPIase family. PPIase H subfamily.

The enzyme catalyses [protein]-peptidylproline (omega=180) = [protein]-peptidylproline (omega=0). PPIases accelerate the folding of proteins. It catalyzes the cis-trans isomerization of proline imidic peptide bonds in oligopeptides. The polypeptide is Peptidyl-prolyl cis-trans isomerase 11 (cyn-11) (Caenorhabditis elegans).